The sequence spans 429 residues: Adenylosuccinate synthetase (429 aa).

Residues 12-18 (GDEGKGK) and 40-42 (GHT) contribute to the GTP site. D13 (proton acceptor) is an active-site residue. 2 residues coordinate Mg(2+): D13 and G40. Residues 13 to 16 (DEGK), 38 to 41 (NAGH), T128, R142, Q223, T238, and R302 each bind IMP. Catalysis depends on H41, which acts as the Proton donor. 298-304 (TTTGRAR) provides a ligand contact to substrate. GTP contacts are provided by residues R304, 330–332 (SID), and 412–414 (SVG).

The protein belongs to the adenylosuccinate synthetase family. As to quaternary structure, homodimer. Requires Mg(2+) as cofactor.

The protein localises to the cytoplasm. The catalysed reaction is IMP + L-aspartate + GTP = N(6)-(1,2-dicarboxyethyl)-AMP + GDP + phosphate + 2 H(+). Its pathway is purine metabolism; AMP biosynthesis via de novo pathway; AMP from IMP: step 1/2. Its function is as follows. Plays an important role in the de novo pathway of purine nucleotide biosynthesis. Catalyzes the first committed step in the biosynthesis of AMP from IMP. The sequence is that of Adenylosuccinate synthetase from Oceanobacillus iheyensis (strain DSM 14371 / CIP 107618 / JCM 11309 / KCTC 3954 / HTE831).